Consider the following 195-residue polypeptide: SAGA-associated factor 11 homolog (195 aa).

The interval 1-22 is disordered; the sequence is MSAANMPTTTGAQGSGNQVPRT. The segment at 105 to 126 adopts an SGF11-type zinc-finger fold; that stretch reads CTCPNCDRLVAAARFAPHLEKC. Positions 140 to 195 are disordered; the sequence is RLATKEGATSAHLHSSGNTGGTDDEDDVDWSSDKRRKKSNQNSRNNGSKKNNGKTF. At serine 171 the chain carries Phosphoserine. Residues 179–195 show a composition bias toward low complexity; that stretch reads NQNSRNNGSKKNNGKTF.

It belongs to the SGF11 family. Component of some SAGA transcription coactivator-HAT complexes, at least composed of Ada2b, not/nonstop, Pcaf/Gcn5, Sgf11 and Spt3. Within the SAGA complex, Sgf11, e(y)2, and not/nonstop form an additional subcomplex of SAGA called the DUB module (deubiquitination module). Interacts directly with not/nonstop. Interacts with the AMEX complex component xmas-2. Interacts with Cbp80; important for promoter recruitment of Sgf11 that is not associated with the DUB module.

The protein localises to the nucleus. The protein resides in the nucleoplasm. Its subcellular location is the cytoplasm. Its function is as follows. Component of the transcription regulatory histone acetylation (HAT) complex SAGA, a multiprotein complex that activates transcription by remodeling chromatin and mediating histone acetylation and deubiquitination. Within the SAGA complex, participates in a subcomplex that specifically deubiquitinates histone H2B. The SAGA complex is recruited to specific gene promoters by activators, where it is required for transcription. Required for nuclear receptor-mediated transactivation. Binds independently on SAGA to promoters in an RNA-dependent manner. Binds to mRNA and is essential for total mRNA export from the nucleus. Required to counteract heterochromatin silencing. Controls the development of neuronal connectivity in visual system by being required for accurate axon targeting in the optic lobe. Required for expression of ecdysone-induced genes such as br/broad. The protein is SAGA-associated factor 11 homolog of Drosophila sechellia (Fruit fly).